The sequence spans 286 residues: Fructose-bisphosphate aldolase (286 aa).

S50 contributes to the D-glyceraldehyde 3-phosphate binding site. D85 acts as the Proton donor in catalysis. Positions 86, 107, 137, and 181 each coordinate Zn(2+). G182 contacts dihydroxyacetone phosphate. H209 contributes to the Zn(2+) binding site. Dihydroxyacetone phosphate-binding positions include G210–T212 and N231–T234.

It belongs to the class II fructose-bisphosphate aldolase family. Zn(2+) serves as cofactor.

It catalyses the reaction beta-D-fructose 1,6-bisphosphate = D-glyceraldehyde 3-phosphate + dihydroxyacetone phosphate. It functions in the pathway carbohydrate degradation; glycolysis; D-glyceraldehyde 3-phosphate and glycerone phosphate from D-glucose: step 4/4. Functionally, catalyzes the aldol condensation of dihydroxyacetone phosphate (DHAP or glycerone-phosphate) with glyceraldehyde 3-phosphate (G3P) to form fructose 1,6-bisphosphate (FBP) in gluconeogenesis and the reverse reaction in glycolysis. The protein is Fructose-bisphosphate aldolase (fba) of Staphylococcus aureus (strain MSSA476).